Consider the following 78-residue polypeptide: D-alanyl carrier protein (78 aa).

Residues 1-77 (MAVKEEVVEI…KVIAKVESLI (77 aa)) form the Carrier domain. O-(pantetheine 4'-phosphoryl)serine is present on Ser35.

This sequence belongs to the DltC family. 4'-phosphopantetheine is transferred from CoA to a specific serine of apo-DCP.

It localises to the cytoplasm. It participates in cell wall biogenesis; lipoteichoic acid biosynthesis. Carrier protein involved in the D-alanylation of lipoteichoic acid (LTA). The loading of thioester-linked D-alanine onto DltC is catalyzed by D-alanine--D-alanyl carrier protein ligase DltA. The DltC-carried D-alanyl group is further transferred to cell membrane phosphatidylglycerol (PG) by forming an ester bond, probably catalyzed by DltD. D-alanylation of LTA plays an important role in modulating the properties of the cell wall in Gram-positive bacteria, influencing the net charge of the cell wall. This is D-alanyl carrier protein from Leuconostoc citreum (strain KM20).